The following is a 684-amino-acid chain: DNA gyrase subunit B, novobiocin-sensitive (684 aa).

Residues 1–22 (MADSGNPNENTPSVATGENGEV) are disordered. The interval 154-302 (VKTDGYRWTQ…RMLSVEIAMQ (149 aa)) is novobiocin-binding. The Toprim domain maps to 463–577 (CEIFIVEGDS…AGHVYLSRPP (115 aa)). Mg(2+) contacts are provided by Glu469, Asp542, and Asp544.

Belongs to the type II topoisomerase GyrB family. In terms of assembly, heterotetramer, composed of two GyrA and two GyrB chains. In the heterotetramer, GyrA contains the active site tyrosine that forms a transient covalent intermediate with DNA, while GyrB binds cofactors and catalyzes ATP hydrolysis. Requires Mg(2+) as cofactor. Mn(2+) serves as cofactor. It depends on Ca(2+) as a cofactor.

It localises to the cytoplasm. The catalysed reaction is ATP-dependent breakage, passage and rejoining of double-stranded DNA.. Its function is as follows. A type II topoisomerase that negatively supercoils closed circular double-stranded (ds) DNA in an ATP-dependent manner to modulate DNA topology and maintain chromosomes in an underwound state. Negative supercoiling favors strand separation, and DNA replication, transcription, recombination and repair, all of which involve strand separation. Also able to catalyze the interconversion of other topological isomers of dsDNA rings, including catenanes and knotted rings. Type II topoisomerases break and join 2 DNA strands simultaneously in an ATP-dependent manner. In Streptomyces niveus (Streptomyces spheroides), this protein is DNA gyrase subunit B, novobiocin-sensitive.